The following is a 328-amino-acid chain: Tetraacyldisaccharide 4'-kinase (328 aa).

An ATP-binding site is contributed by 55–62 (TAGGNGKT).

Belongs to the LpxK family.

It carries out the reaction a lipid A disaccharide + ATP = a lipid IVA + ADP + H(+). It participates in glycolipid biosynthesis; lipid IV(A) biosynthesis; lipid IV(A) from (3R)-3-hydroxytetradecanoyl-[acyl-carrier-protein] and UDP-N-acetyl-alpha-D-glucosamine: step 6/6. Transfers the gamma-phosphate of ATP to the 4'-position of a tetraacyldisaccharide 1-phosphate intermediate (termed DS-1-P) to form tetraacyldisaccharide 1,4'-bis-phosphate (lipid IVA). This chain is Tetraacyldisaccharide 4'-kinase, found in Escherichia fergusonii (strain ATCC 35469 / DSM 13698 / CCUG 18766 / IAM 14443 / JCM 21226 / LMG 7866 / NBRC 102419 / NCTC 12128 / CDC 0568-73).